The sequence spans 332 residues: Centrosomal AT-AC splicing factor (332 aa).

The segment at 1 to 169 (MAPAQRCPLC…QSRQEVVRSV (169 aa)) is required for centrosome location. N6-acetyllysine; by NAT10 is present on lysine 31. The stretch at 137-168 (LDSYEEKEDKVIKEMAAQIREVEQSRQEVVRS) forms a coiled coil. The interval 169-213 (VLEPQAVPDPEEGSSAPRSWKGMNSQVASSLQQPSNLDLPPAPEL) is disordered. Positions 190 to 204 (GMNSQVASSLQQPSN) are enriched in polar residues.

As to quaternary structure, interacts with SASS6; the interaction increases with CENATAC acetylation. Post-translationally, acetylated. Acetylation oscillates throughout the cell cycle, and the acetylation state at Lys-31 is regulated by the deacetylase SIRT1 and the acetyltransferase NAT10. Deacetylated CENATAC is responsible for its centrosome targeting, and acetylated CENATAC promotes SASS6 degradation by enhancing the binding affinity of SASS6 for APC/C E3 ubiquitin-protein ligase complex/FZR1.

The protein localises to the cytoplasm. It localises to the cytoskeleton. Its subcellular location is the microtubule organizing center. The protein resides in the centrosome. Functionally, component of the minor spliceosome that promotes splicing of a specific, rare minor intron subtype. Negative regulator of centrosome duplication. Constrains centriole number by modulating the degradation of the centrosome-duplication-associated protein SASS6 in an acetylation-dependent manner. SIRT1 deacetylates CENATAC in G1 phase, allowing for SASS6 accumulation on the centrosome and subsequent procentriole assembly. The CENATAC acetylation level is restored in mitosis by NAT10, promoting SASS6 proteasome degradation by facilitating SASS6 binding to APC/C E3 ubiquitin-protein ligase complex/FZR1. The sequence is that of Centrosomal AT-AC splicing factor from Homo sapiens (Human).